A 1226-amino-acid chain; its full sequence is Chromosome partition protein Smc (1226 aa).

Residue 32 to 39 (PNGCGKSN) participates in ATP binding. Coiled-coil stretches lie at residues 173 to 231 (ITKF…IKRN) and 269 to 491 (NSLE…SKSL). One can recognise an SMC hinge domain in the interval 527–635 (YQLLGNLIQC…FDGYFIASKF (109 aa)). Coiled-coil stretches lie at residues 679-741 (QGVV…AAKK), 775-965 (MLES…LREA), and 1006-1078 (HRRY…KSKE).

This sequence belongs to the SMC family. In terms of assembly, homodimer.

The protein resides in the cytoplasm. Its function is as follows. Required for chromosome condensation and partitioning. This Halobacteriovorax marinus (strain ATCC BAA-682 / DSM 15412 / SJ) (Bacteriovorax marinus) protein is Chromosome partition protein Smc.